Here is a 507-residue protein sequence, read N- to C-terminus: Alkyl hydroperoxide reductase subunit F (507 aa).

D207–I222 is an FAD binding site. C335 and C338 are joined by a disulfide. D347–A361 contacts NAD(+). T467–D477 lines the FAD pocket.

Belongs to the class-II pyridine nucleotide-disulfide oxidoreductase family. In terms of assembly, homodimer. It depends on FAD as a cofactor.

Serves to protect the cell against DNA damage by alkyl hydroperoxides. It can use either NADH or NADPH as electron donor for direct reduction of redox dyes or of alkyl hydroperoxides when combined with the AhpC protein. In Staphylococcus aureus (strain Mu50 / ATCC 700699), this protein is Alkyl hydroperoxide reductase subunit F (ahpF).